The primary structure comprises 47 residues: MAKGKRTFQPNNRRRARVHGFRLRMRTRAGRAIVTGRRRKGRRALTA.

Belongs to the bacterial ribosomal protein bL34 family.

This chain is Large ribosomal subunit protein bL34, found in Mycobacterium ulcerans (strain Agy99).